A 113-amino-acid chain; its full sequence is UPF0102 protein Ccon26_01140 (113 aa).

It belongs to the UPF0102 family.

The polypeptide is UPF0102 protein Ccon26_01140 (Campylobacter concisus (strain 13826)).